Here is a 312-residue protein sequence, read N- to C-terminus: Zinc-finger homeodomain protein 9 (312 aa).

A disordered region spans residues 1 to 27 (MLEVRSMDMTPKSPEPESETPTRIQPA). Serine 13 carries the post-translational modification Phosphoserine. The segment at 52–103 (YKECLKNHAAAIGGHALDGCGEFMPSPSSTPSDPTSLKCAACGCHRNFHRRE) adopts a ZF-HD dimerization-type; degenerate zinc-finger fold. Disordered regions lie at residues 128–155 (QPHH…PPPI) and 253–312 (FSGG…SSSS). Pro residues predominate over residues 136–155 (PPPLAPPLPRSPNSSSPPPI). Positions 192–255 (RKRFRTKFSS…NNKNSFKFSG (64 aa)) form a DNA-binding region, homeobox. Residue serine 273 is modified to Phosphoserine.

In terms of assembly, homo- and heterodimer with other ZFHD proteins. Interacts with MIF3; this interaction prevents nuclear localization and DNA-binding to inhibit transcription regulation activity. Binds to ZHD1, ZHD2 and ZHD11. In terms of tissue distribution, mostly expressed in flowers, stems and inflorescence and, to a lower extent, in leaves and stems.

It is found in the nucleus. Functionally, putative transcription factor. The polypeptide is Zinc-finger homeodomain protein 9 (ZHD9) (Arabidopsis thaliana (Mouse-ear cress)).